The primary structure comprises 433 residues: Energy-coupling factor transporter ATP-binding protein EcfA2 (433 aa).

In terms of domain architecture, ABC transporter spans 25–389; it reads VRVKNLYAVY…QHIINSTSIQ (365 aa). Residue 62–69 coordinates ATP; that stretch reads GNSGSGKS.

This sequence belongs to the ABC transporter superfamily. Energy-coupling factor EcfA family. In terms of assembly, forms a stable energy-coupling factor (ECF) transporter complex composed of 2 membrane-embedded substrate-binding proteins (S component), 2 ATP-binding proteins (A component) and 2 transmembrane proteins (T component).

It localises to the cell membrane. In terms of biological role, ATP-binding (A) component of a common energy-coupling factor (ECF) ABC-transporter complex. Unlike classic ABC transporters this ECF transporter provides the energy necessary to transport a number of different substrates. This chain is Energy-coupling factor transporter ATP-binding protein EcfA2, found in Ureaplasma parvum serovar 3 (strain ATCC 700970).